A 178-amino-acid chain; its full sequence is Caveolin-1 (178 aa).

Residue S2 is modified to N-acetylserine. At S2 the chain carries Phosphoserine. A required for homooligomerization region spans residues 2-94 (SGGKYVDSEG…WKASFTTFTV (93 aa)). The Cytoplasmic portion of the chain corresponds to 2 to 104 (SGGKYVDSEG…TKYWFYRLLS (103 aa)). An N6-acetyllysine; alternate modification is found at K5. Residue K5 forms a Glycyl lysine isopeptide (Lys-Gly) (interchain with G-Cter in ubiquitin); alternate linkage. Phosphotyrosine is present on Y6. Position 9 is a phosphoserine (S9). A Phosphotyrosine; by ABL1 and INSR modification is found at Y14. Phosphotyrosine is present on Y25. Residues K26, K30, K39, K47, and K57 each participate in a glycyl lysine isopeptide (Lys-Gly) (interchain with G-Cter in ubiquitin) cross-link. The interaction with CAVIN3 stretch occupies residues 82–94 (DGIWKASFTTFTV). Residues 105–125 (TIFGIPMALIWGIYFAILSFL) constitute an intramembrane region (helical). Residues 126–178 (HIWAVVPCIKSFLIEIQCISRVYSIYVHTFCDPLFEAIGKIFSNIRISTQKEI) are Cytoplasmic-facing. Residues 131 to 142 (VPCIKSFLIEIQ) form an interacts with SPRY1, SPRY2, SPRY3 and SPRY4 region. 3 S-palmitoyl cysteine lipidation sites follow: C133, C143, and C156. Positions 149–160 (SIYVHTFCDPLF) are interacts with SPRY1, SPRY2, and SPRY4. An interacts with SPRY1, SPRY2, SPRY3 and SPRY4 region spans residues 167–178 (FSNIRISTQKEI).

The protein belongs to the caveolin family. In terms of assembly, homooligomer. Interacts (via the N-terminus) with DPP4; the interaction is direct. Forms a stable heterooligomeric complex with CAV2 that targets to lipid rafts and drives caveolae formation. Interacts with BMX, BTK, CTNNB1, CDH1, GLIPR2, JUP, NOSTRIN, SNAP25 and STX1A. Interacts with SLC7A9. Interacts with TGFBR1. Interacts with CTNNB1, CDH1 and JUP. Interacts with PACSIN2; this interaction induces membrane tubulation. Interacts with CAVIN3 (via leucine-zipper domain) in a cholesterol-sensitive manner. Interacts with EHD2 in a cholesterol-dependent manner. Interacts with CAVIN1. Forms a ternary complex with UBXN6 and VCP; mediates CAV1 targeting to lysosomes for degradation. Interacts with ABCG1; this interaction regulates ABCG1-mediated cholesterol efflux. Interacts with NEU3; this interaction enhances NEU3 sialidase activity within caveola. Interacts (via C-terminus) with SPRY1, SPRY2 (via C-terminus), SPRY3, and SPRY4. Interacts with IGFBP5; this interaction allows trafficking of IGFBP5 from the plasma membrane to the nucleus. In terms of processing, the N-terminus of both isoforms are blocked. Phosphorylated at Tyr-14 by ABL1 in response to oxidative stress. Post-translationally, ubiquitinated. Undergo monoubiquitination and multi- and/or polyubiquitination. Monoubiquitination of N-terminal lysines promotes integration in a ternary complex with UBXN6 and VCP which promotes oligomeric CAV1 targeting to lysosomes for degradation. Ubiquitinated by ZNRF1; leading to degradation and modulation of the TLR4-mediated immune response. As to expression, adipose tissue, lung, heart, skeletal muscle, stomach, small bowel, kidney, spleen and testis (at protein level).

It localises to the golgi apparatus membrane. It is found in the cell membrane. Its subcellular location is the membrane. The protein localises to the caveola. The protein resides in the membrane raft. It localises to the golgi apparatus. It is found in the trans-Golgi network. May act as a scaffolding protein within caveolar membranes. Forms a stable heterooligomeric complex with CAV2 that targets to lipid rafts and drives caveolae formation. Mediates the recruitment of CAVIN proteins (CAVIN1/2/3/4) to the caveolae. Interacts directly with G-protein alpha subunits and can functionally regulate their activity. Involved in the costimulatory signal essential for T-cell receptor (TCR)-mediated T-cell activation. Its binding to DPP4 induces T-cell proliferation and NF-kappa-B activation in a T-cell receptor/CD3-dependent manner. Recruits CTNNB1 to caveolar membranes and may regulate CTNNB1-mediated signaling through the Wnt pathway. Negatively regulates TGFB1-mediated activation of SMAD2/3 by mediating the internalization of TGFBR1 from membrane rafts leading to its subsequent degradation. Binds 20(S)-hydroxycholesterol (20(S)-OHC). This Mus musculus (Mouse) protein is Caveolin-1 (Cav1).